We begin with the raw amino-acid sequence, 518 residues long: Anthranilate synthase component 1 (518 aa).

L-tryptophan is bound by residues serine 38 and 283 to 285 (PYM). 324–325 (GT) is a chorismate binding site. Residue glutamate 357 participates in Mg(2+) binding. Chorismate contacts are provided by residues tyrosine 445, arginine 465, 479-481 (GAG), and glycine 481. Glutamate 494 provides a ligand contact to Mg(2+).

The protein belongs to the anthranilate synthase component I family. Heterotetramer consisting of two non-identical subunits: a beta subunit (TrpG) and a large alpha subunit (TrpE). Requires Mg(2+) as cofactor.

It carries out the reaction chorismate + L-glutamine = anthranilate + pyruvate + L-glutamate + H(+). It functions in the pathway amino-acid biosynthesis; L-tryptophan biosynthesis; L-tryptophan from chorismate: step 1/5. Its activity is regulated as follows. Feedback inhibited by tryptophan. Part of a heterotetrameric complex that catalyzes the two-step biosynthesis of anthranilate, an intermediate in the biosynthesis of L-tryptophan. In the first step, the glutamine-binding beta subunit (TrpG) of anthranilate synthase (AS) provides the glutamine amidotransferase activity which generates ammonia as a substrate that, along with chorismate, is used in the second step, catalyzed by the large alpha subunit of AS (TrpE) to produce anthranilate. In the absence of TrpG, TrpE can synthesize anthranilate directly from chorismate and high concentrations of ammonia. In Corynebacterium glutamicum (strain ATCC 13032 / DSM 20300 / JCM 1318 / BCRC 11384 / CCUG 27702 / LMG 3730 / NBRC 12168 / NCIMB 10025 / NRRL B-2784 / 534), this protein is Anthranilate synthase component 1 (trpE).